Reading from the N-terminus, the 438-residue chain is Trigger factor (438 aa).

Positions 160 to 245 (DDKVTIDFVG…VKKIQQAELP (86 aa)) constitute a PPIase FKBP-type domain.

This sequence belongs to the FKBP-type PPIase family. Tig subfamily.

Its subcellular location is the cytoplasm. It carries out the reaction [protein]-peptidylproline (omega=180) = [protein]-peptidylproline (omega=0). Functionally, involved in protein export. Acts as a chaperone by maintaining the newly synthesized protein in an open conformation. Functions as a peptidyl-prolyl cis-trans isomerase. The chain is Trigger factor from Francisella tularensis subsp. novicida (strain U112).